A 23-amino-acid chain; its full sequence is Conotoxin as25a (23 aa).

4-hydroxyproline; partial is present on Pro4. At Pro23 the chain carries 4-hydroxyproline; partial; alternate. Proline amide; alternate is present on Pro23.

Post-translationally, the name as25b given in PubMed:23474143 corresponds to the hydroxylated peptide. The amidation of the C-terminus of this hydroxylated peptide is not directly confirmed. Contains 3 disulfide bonds. As to expression, expressed by the venom duct.

It localises to the secreted. Its function is as follows. Upon intracranial injection in mice, as25a (the toxin without the two 4-hydroxyprolines) provokes paralysis of the hind limbs and death with a dose of 240 pmol. In Conus cancellatus (Cancellate cone), this protein is Conotoxin as25a.